The sequence spans 149 residues: Probable flagellum biosynthesis repressor protein FlbT (149 aa).

Belongs to the FlbT family.

In terms of biological role, has a post-transcriptional repressor function in flagellum biogenesis. Associates with the 5'-UTR of fljK mRNA and promotes its degradation. This Sinorhizobium medicae (strain WSM419) (Ensifer medicae) protein is Probable flagellum biosynthesis repressor protein FlbT.